A 219-amino-acid polypeptide reads, in one-letter code: Dynein light chain Tctex-type 4 (219 aa).

Residues 1-84 (MACRTLPSRR…RRPSLGPVPP (84 aa)) form a disordered region. The span at 9–20 (RRQEEETTKDLA) shows a compositional bias: basic and acidic residues. Serine 64 carries the phosphoserine modification.

Belongs to the dynein light chain Tctex-type family. As to quaternary structure, interacts with ENG/endoglin, TGFBR2 and TGFBR3. Interacts with PPP1CC.

The protein localises to the cell projection. It is found in the cilium. The protein resides in the flagellum. It localises to the cytoplasmic vesicle. Its subcellular location is the secretory vesicle. The protein localises to the acrosome. It is found in the cytoplasm. The protein resides in the cytoskeleton. It localises to the cilium axoneme. Its subcellular location is the nucleus. The protein localises to the microtubule organizing center. The chain is Dynein light chain Tctex-type 4 (Dynlt4) from Mus musculus (Mouse).